Reading from the N-terminus, the 169-residue chain is Disulfide bond formation protein B 1 (169 aa).

Residues 1-14 are Cytoplasmic-facing; it reads MSDNTLYLRREKRF. A helical membrane pass occupies residues 15–31; the sequence is LVLLGIICLALIGGALY. The Periplasmic segment spans residues 32–49; that stretch reads MQIVLGEAPCPLCILQRY. An intrachain disulfide couples C41 to C44. A helical membrane pass occupies residues 50–64; the sequence is ALLFIAIFAFIGAAM. At 65 to 71 the chain is on the cytoplasmic side; sequence SGRRGVT. Residues 72 to 89 traverse the membrane as a helical segment; it reads VCETLVTLSALGGIAAAG. Topologically, residues 90–144 are periplasmic; sequence RHVWILAHPSDSCGIDVLQPIVDGLPLATLFPTGFQVSGFCTTPYPPVLGLSLAQ. C102 and C130 are disulfide-bonded. A helical transmembrane segment spans residues 145-163; sequence WALAAFVLTAVLVPACIIR. At 164–169 the chain is on the cytoplasmic side; sequence NRRKPY.

The protein belongs to the DsbB family.

The protein localises to the cell inner membrane. Its function is as follows. Required for disulfide bond formation in some periplasmic proteins. Acts by oxidizing the DsbA protein. The polypeptide is Disulfide bond formation protein B 1 (Pseudomonas savastanoi pv. phaseolicola (strain 1448A / Race 6) (Pseudomonas syringae pv. phaseolicola (strain 1448A / Race 6))).